The sequence spans 85 residues: Beta-toxin BmKAs1 (85 aa).

The signal sequence occupies residues M1–A19. The LCN-type CS-alpha/beta domain occupies D20 to N82. Cystine bridges form between C31–C81, C35–C56, C42–C63, and C46–C65.

It belongs to the long (4 C-C) scorpion toxin superfamily. Sodium channel inhibitor family. In terms of processing, a possible sulfoxide Met-85 on BmP09 could explain the difference of function between BmK AS-1 and BmP09. In terms of tissue distribution, expressed by the venom gland.

The protein localises to the secreted. Its function is as follows. Beta toxins bind voltage-independently at site-4 of sodium channels (Nav) and shift the voltage of activation toward more negative potentials thereby affecting sodium channel activation and promoting spontaneous and repetitive firing. BmKAs1 also significantly stimulates the binding of [3H]-ryanodine to ryanodine receptors on the sarcoplasmic reticulum of the skeletal muscle. It also displays antinociceptive effect in rat models. In terms of biological role, toxin BmP09 (which may be post-translationally modified) specifically and reversibly blocks large conductance calcium-dependent and voltage-dependent potassium channels (BK) but has no effect on sodium channels. The protein is Beta-toxin BmKAs1 of Olivierus martensii (Manchurian scorpion).